Here is a 422-residue protein sequence, read N- to C-terminus: Adenylosuccinate synthetase (422 aa).

GTP-binding positions include 11–17 and 39–41; these read GDEGKGK and GHT. Aspartate 12 acts as the Proton acceptor in catalysis. 2 residues coordinate Mg(2+): aspartate 12 and glycine 39. Residues 12-15, 37-40, threonine 129, arginine 143, asparagine 219, threonine 234, and arginine 298 each bind IMP; these read DEGK and NAGH. Residue histidine 40 is the Proton donor of the active site. 294 to 300 contacts substrate; sequence VTTGRRR. Residues arginine 300, 326–328, and 409–411 contribute to the GTP site; these read KLD and GTG.

The protein belongs to the adenylosuccinate synthetase family. In terms of assembly, homodimer. Mg(2+) serves as cofactor.

Its subcellular location is the cytoplasm. It carries out the reaction IMP + L-aspartate + GTP = N(6)-(1,2-dicarboxyethyl)-AMP + GDP + phosphate + 2 H(+). Its pathway is purine metabolism; AMP biosynthesis via de novo pathway; AMP from IMP: step 1/2. In terms of biological role, plays an important role in the de novo pathway and in the salvage pathway of purine nucleotide biosynthesis. Catalyzes the first committed step in the biosynthesis of AMP from IMP. The chain is Adenylosuccinate synthetase from Blastomyces gilchristii (strain SLH14081) (Blastomyces dermatitidis).